The sequence spans 85 residues: U4-theraphotoxin-Hhn1a (85 aa).

The signal sequence occupies residues 1–22 (MKMTLIAILTCAAVLVLHTTAA). The propeptide occupies 23–48 (EELEAESQLMEVGMPDTELAAVDEER). 3 disulfide bridges follow: Cys-52-Cys-66, Cys-56-Cys-77, and Cys-71-Cys-82.

It belongs to the neurotoxin 12 (Hwtx-2) family. 02 (Hwtx-2) subfamily. In terms of assembly, monomer. Expressed by the venom gland.

It localises to the secreted. Functionally, neurotoxin active on both insects and mammals. The sequence is that of U4-theraphotoxin-Hhn1a from Cyriopagopus hainanus (Chinese bird spider).